The chain runs to 117 residues: Reprimo-like protein (117 aa).

A helical transmembrane segment spans residues 64–84 (VAQIAVLCVLSLTVVFGVFFL). Serine 106 is subject to Phosphoserine.

Belongs to the reprimo family.

Its subcellular location is the membrane. The polypeptide is Reprimo-like protein (Rprml) (Mus musculus (Mouse)).